The primary structure comprises 37 residues: Large ribosomal subunit protein bL36 (37 aa).

It belongs to the bacterial ribosomal protein bL36 family.

The chain is Large ribosomal subunit protein bL36 from Francisella tularensis subsp. tularensis (strain FSC 198).